Here is a 126-residue protein sequence, read N- to C-terminus: Large ribosomal subunit protein bL12 (126 aa).

This sequence belongs to the bacterial ribosomal protein bL12 family. Homodimer. Part of the ribosomal stalk of the 50S ribosomal subunit. Forms a multimeric L10(L12)X complex, where L10 forms an elongated spine to which 2 to 4 L12 dimers bind in a sequential fashion. Binds GTP-bound translation factors.

Functionally, forms part of the ribosomal stalk which helps the ribosome interact with GTP-bound translation factors. Is thus essential for accurate translation. The chain is Large ribosomal subunit protein bL12 from Rhizorhabdus wittichii (strain DSM 6014 / CCUG 31198 / JCM 15750 / NBRC 105917 / EY 4224 / RW1) (Sphingomonas wittichii).